Consider the following 692-residue polypeptide: Ribosome-releasing factor 2, mitochondrial (692 aa).

A mitochondrion-targeting transit peptide spans 1–29 (MLKYAWQSGPKQRNRWLWHLSNQIWKRSY). One can recognise a tr-type G domain in the interval 31-310 (SKIRNIGILA…AVNAYLPAPE (280 aa)). GTP is bound by residues 40–47 (AHIDAGKT), 104–108 (DTPGH), and 158–161 (NKMD).

Belongs to the TRAFAC class translation factor GTPase superfamily. Classic translation factor GTPase family. EF-G/EF-2 subfamily.

It localises to the mitochondrion. Mitochondrial GTPase that mediates the disassembly of ribosomes from messenger RNA at the termination of mitochondrial protein biosynthesis. Not involved in the GTP-dependent ribosomal translocation step during translation elongation. The sequence is that of Ribosome-releasing factor 2, mitochondrial from Drosophila sechellia (Fruit fly).